The following is a 525-amino-acid chain: Ribonuclease III domain-containing protein RNC1, chloroplastic (525 aa).

The transit peptide at 1-28 (MGPPAMAFQALTLTPLPFSLHSSSRRVR) directs the protein to the chloroplast. RNase III domains are found at residues 125 to 271 (LLEA…LCFG) and 403 to 503 (EHPR…CVYG).

As to quaternary structure, interacts with RNA. Part of large ribonucleo-protein particles that contain CAF1 and/or CAF2.

The protein localises to the plastid. Its subcellular location is the chloroplast stroma. Its function is as follows. Binds specific group II introns in chloroplasts and facilitates their splicing. Acts on both subgroup IIA and subgroup IIB introns. The substrates of the subgroup II also require the CRM domain proteins CAF1 or CAF2. Binds both single-stranded and double-stranded RNA non-specifically, but lacks endonuclease activity. Required for plastid ribosome biogenesis. The protein is Ribonuclease III domain-containing protein RNC1, chloroplastic of Zea mays (Maize).